Consider the following 252-residue polypeptide: Methionine aminopeptidase (252 aa).

His76 contacts substrate. The a divalent metal cation site is built by Asp93, Asp104, and His168. His175 contributes to the substrate binding site. Positions 202 and 233 each coordinate a divalent metal cation.

It belongs to the peptidase M24A family. Methionine aminopeptidase type 1 subfamily. Monomer. Co(2+) is required as a cofactor. It depends on Zn(2+) as a cofactor. Mn(2+) serves as cofactor. The cofactor is Fe(2+).

It carries out the reaction Release of N-terminal amino acids, preferentially methionine, from peptides and arylamides.. Removes the N-terminal methionine from nascent proteins. The N-terminal methionine is often cleaved when the second residue in the primary sequence is small and uncharged (Met-Ala-, Cys, Gly, Pro, Ser, Thr, or Val). Requires deformylation of the N(alpha)-formylated initiator methionine before it can be hydrolyzed. This chain is Methionine aminopeptidase, found in Staphylococcus aureus (strain MRSA252).